Here is a 433-residue protein sequence, read N- to C-terminus: Tol-Pal system protein TolB (433 aa).

A signal peptide spans 1 to 26; sequence MSLMTKLGFRALVASCLIAAGGAAHA.

The protein belongs to the TolB family. As to quaternary structure, the Tol-Pal system is composed of five core proteins: the inner membrane proteins TolA, TolQ and TolR, the periplasmic protein TolB and the outer membrane protein Pal. They form a network linking the inner and outer membranes and the peptidoglycan layer.

It localises to the periplasm. Its function is as follows. Part of the Tol-Pal system, which plays a role in outer membrane invagination during cell division and is important for maintaining outer membrane integrity. The sequence is that of Tol-Pal system protein TolB from Burkholderia pseudomallei (strain 1710b).